The sequence spans 1040 residues: MQVLPPSSTGGPSRLFIMRPVATTLLMVAILIAGIIGYRFLPVSALPEVDYPTIQVITLYPGASPDVVTSAITAPLERQFGQMSGLKQMSSQSSGGASVVTLQFQLTLPLDVAEQEVQAAINAATNLLPSDLPNPPVYSKVNPADPPIMTLAVTSSAMPMTQVEDMVETRVAQKISQVSGVGLVTLSGGQRPAVRVKLNAQAIAALGLTSETIRTAIVSANVNSAKGSLDGPTRAVTLSANDQMQSADEYRQLIVAYQNGAPIRLGDVATVEQGAENRWLGAWANKEQAIVMNVQRQPGANIIDTADSIRAMLPQLIESLPKSVNVKVLSDRTTNIRASVSDTQFELMLAMALVVMIIYVFLRNVPATIIPAVAVPLSLVGTFAVMVFLDFSINNLTLMALTIATGFVVDDAIVVIENISRYIEKGEKPLAAALKGAGEIGFTIISLTFSLIAVLIPLLFMGDIVGRLFREFAVTLAVAILISAVVSLTLTPMMCARMLSAESLRKQNRFSRASERMFERIIAAYGRMLEKVLNHPWATLSVALGTLALSVMLWIVIPKGFFPIQDNGIIQGTLQAPQSVSFASMAQRQQAVSDVIMKDPAVESLTSFVGVDGTNPSLNSARLQINLKPLDDRDDRVNTVIERLQSAVAKVPGVELYLQPTQDLTIDTTVSRTQYQFTLQATSLEALSTWVPQLVTKLQELPQLSDVSSDWQDKGLAAYVNVNRDTASRLGISMADVDNALYNAFGQRLISTIYTQANQYRVVLEHNTEQTPGLTALDTVRLTSKNGGIVPLSAIATVEQRFAPLSINHLDQFPSTTISFNVPDNYSLGEAVESILNAEKTLNFPTDIQTQFQGSTLAFQAALGNTIWLIVAAVVAMYIVLGVLYESFIHPVTILSTLPTAGVGALLALMLSGSELDVIAIIGIILLIGIVKKNAIMMIDFALAAEREQGMAPRDAIFQACLLRFRPILMTTMAALLGALPLMLSTGVGAELRRPLGIGMVGGLLVSQVLTLFTTPVIYLLFDTLALKMKARFPKREEEA.

12 helical membrane-spanning segments follow: residues 16 to 36 (FIMR…AGII), 342 to 362 (DTQF…YVFL), 369 to 389 (IIPA…MVFL), 396 to 416 (LTLM…IVVI), 440 to 460 (IGFT…PLLF), 472 to 492 (FAVT…TLTP), 537 to 557 (WATL…WIVI), 869 to 889 (LIVA…ESFI), 890 to 910 (HPVT…LALM), 911 to 931 (LSGS…IGIV), 968 to 988 (ILMT…STGV), and 998 to 1018 (IGMV…TPVI).

This sequence belongs to the resistance-nodulation-cell division (RND) (TC 2.A.6) family. MdtB subfamily. As to quaternary structure, part of a tripartite efflux system composed of MdtA, MdtB and MdtC. MdtB forms a heteromultimer with MdtC.

It localises to the cell inner membrane. The protein is Multidrug resistance protein MdtB of Enterobacter sp. (strain 638).